A 660-amino-acid chain; its full sequence is Secretin PulD (660 aa).

Residues 1-27 form the signal peptide; that stretch reads MIIANVIRSFSLTLLIFAALLFRPAAA. Residues 28 to 124 form an N0 region; sequence EEFSASFKGT…VASDAAPGIG (97 aa). The segment at 126–190 is N1; that stretch reads EVVTRVVPLT…TIVERVDNAG (65 aa). The interval 191–264 is N2; it reads DRSVVTVPLS…MIKQLDRQQA (74 aa). The N3 stretch occupies residues 267 to 341; the sequence is GNTKVIYLKY…DLERVIAQLD (75 aa). The segment at 346–596 is secretin; it reads QVLVEAIIAE…LFIRPTVIRD (251 aa). A s domain region spans residues 598-660; sequence DEYRQASSGQ…IDAFNLGGNL (63 aa).

It belongs to the bacterial secretin family. GSP D subfamily. Forms a cylindrical channel with 15 subunits.

Its subcellular location is the cell outer membrane. Functionally, involved in a type II secretion system (T2SS, formerly general secretion pathway, GSP) for the export of proteins. Required for the translocation of pullulanase. This subunit forms the outer membrane channel. In Klebsiella pneumoniae, this protein is Secretin PulD (pulD).